The following is a 398-amino-acid chain: UDP-D-apiose/UDP-D-xylose synthase (398 aa).

57 to 88 (DVYCDKIRHLVDPAPPHLHGRISFHRLNIKND) is an NAD(+) binding site. Residue R190 coordinates substrate. The Proton acceptor role is filled by Y193. 193-197 (YACAK) contacts NAD(+). N222 lines the substrate pocket. Residue R243 coordinates NAD(+). Substrate contacts are provided by residues 244–248 (VLACF), 261–268 (VDGGQSQR), and 345–349 (DSDKR).

The protein belongs to the NAD(P)-dependent epimerase/dehydratase family. Homodimer. NAD(+) is required as a cofactor.

The protein localises to the cytoplasm. In terms of biological role, catalyzes the conversion of UDP-D-glucuronate to a mixture of UDP-D-apiose and UDP-D-xylose. D-Apiose (3-C-hydroxymethyl-d-erythrose) is the only plant cell wall monosaccharide with a branched carbon skeleton and found in rhamnogalacturonan II (RG-II), apiogalacturonan, and several apioglycosides. This chain is UDP-D-apiose/UDP-D-xylose synthase, found in Oryza sativa subsp. japonica (Rice).